Here is a 486-residue protein sequence, read N- to C-terminus: UDP-N-acetylmuramate--L-alanine ligase (486 aa).

126–132 (GTHGKTT) contributes to the ATP binding site.

Belongs to the MurCDEF family.

The protein localises to the cytoplasm. The enzyme catalyses UDP-N-acetyl-alpha-D-muramate + L-alanine + ATP = UDP-N-acetyl-alpha-D-muramoyl-L-alanine + ADP + phosphate + H(+). Its pathway is cell wall biogenesis; peptidoglycan biosynthesis. Its function is as follows. Cell wall formation. The chain is UDP-N-acetylmuramate--L-alanine ligase from Pectobacterium atrosepticum (strain SCRI 1043 / ATCC BAA-672) (Erwinia carotovora subsp. atroseptica).